Reading from the N-terminus, the 397-residue chain is Tryptophan synthase beta chain (397 aa).

Residue lysine 91 is modified to N6-(pyridoxal phosphate)lysine.

This sequence belongs to the TrpB family. As to quaternary structure, tetramer of two alpha and two beta chains. It depends on pyridoxal 5'-phosphate as a cofactor.

The catalysed reaction is (1S,2R)-1-C-(indol-3-yl)glycerol 3-phosphate + L-serine = D-glyceraldehyde 3-phosphate + L-tryptophan + H2O. The protein operates within amino-acid biosynthesis; L-tryptophan biosynthesis; L-tryptophan from chorismate: step 5/5. Its function is as follows. The beta subunit is responsible for the synthesis of L-tryptophan from indole and L-serine. In Bacillus cereus (strain ZK / E33L), this protein is Tryptophan synthase beta chain.